Here is a 236-residue protein sequence, read N- to C-terminus: 2-C-methyl-D-erythritol 4-phosphate cytidylyltransferase (236 aa).

It belongs to the IspD/TarI cytidylyltransferase family. IspD subfamily.

The catalysed reaction is 2-C-methyl-D-erythritol 4-phosphate + CTP + H(+) = 4-CDP-2-C-methyl-D-erythritol + diphosphate. It functions in the pathway isoprenoid biosynthesis; isopentenyl diphosphate biosynthesis via DXP pathway; isopentenyl diphosphate from 1-deoxy-D-xylulose 5-phosphate: step 2/6. Functionally, catalyzes the formation of 4-diphosphocytidyl-2-C-methyl-D-erythritol from CTP and 2-C-methyl-D-erythritol 4-phosphate (MEP). The protein is 2-C-methyl-D-erythritol 4-phosphate cytidylyltransferase of Burkholderia vietnamiensis (strain G4 / LMG 22486) (Burkholderia cepacia (strain R1808)).